The sequence spans 745 residues: Catalase-peroxidase (745 aa).

A cross-link (tryptophyl-tyrosyl-methioninium (Trp-Tyr) (with M-249)) is located at residues tryptophan 97–tyrosine 223. Histidine 98 serves as the catalytic Proton acceptor. Residues tyrosine 223–methionine 249 constitute a cross-link (tryptophyl-tyrosyl-methioninium (Tyr-Met) (with W-97)). Histidine 264 provides a ligand contact to heme b. The interval lysine 345–valine 368 is disordered.

It belongs to the peroxidase family. Peroxidase/catalase subfamily. Homodimer or homotetramer. Heme b serves as cofactor. Post-translationally, formation of the three residue Trp-Tyr-Met cross-link is important for the catalase, but not the peroxidase activity of the enzyme.

The enzyme catalyses H2O2 + AH2 = A + 2 H2O. It carries out the reaction 2 H2O2 = O2 + 2 H2O. Bifunctional enzyme with both catalase and broad-spectrum peroxidase activity. The chain is Catalase-peroxidase from Phenylobacterium zucineum (strain HLK1).